A 229-amino-acid chain; its full sequence is RNA pyrophosphohydrolase (229 aa).

The 144-residue stretch at 6–149 (GFRPNVGIIL…KRGVYEMALT (144 aa)) folds into the Nudix hydrolase domain. The short motif at 38-59 (GGIDRGETPEQAMFRELHEEVG) is the Nudix box element. The segment at 168-229 (SGMRPREAHE…QVLHPDPGKA (62 aa)) is disordered.

This sequence belongs to the Nudix hydrolase family. RppH subfamily. Requires a divalent metal cation as cofactor.

Functionally, accelerates the degradation of transcripts by removing pyrophosphate from the 5'-end of triphosphorylated RNA, leading to a more labile monophosphorylated state that can stimulate subsequent ribonuclease cleavage. This Delftia acidovorans (strain DSM 14801 / SPH-1) protein is RNA pyrophosphohydrolase.